The primary structure comprises 778 residues: Aerobic respiration control sensor protein ArcB (778 aa).

The Cytoplasmic segment spans residues 1–25 (MKQIRLLAQYYVDLMMKLGLVRFSM). Residues 26-46 (LLALALVVLAIVVQMAVTMVL) form a helical membrane-spanning segment. The Periplasmic portion of the chain corresponds to 47–57 (HGQVESIDVIR). The helical transmembrane segment at 58–78 (SIFFGLLITPWAVYFLSVVVE) threads the bilayer. The Cytoplasmic portion of the chain corresponds to 79 to 778 (QLEESRQRLS…KAWVAKATKK (700 aa)). A PAS domain is found at 153-223 (QSSFLRSFLD…ETDEKVFRHN (71 aa)). In terms of domain architecture, PAC spans 226 to 278 (LTYEQWLDYPDGRKACFEIRKVPYYDRVGKRHGLMGFGRDITERKRYQDALER). One can recognise a Histidine kinase domain in the interval 289–507 (TISHELRTPL…TFTLTIHAPS (219 aa)). H292 carries the post-translational modification Phosphohistidine; by autocatalysis. In terms of domain architecture, Response regulatory spans 527-643 (NVLLVEDIEL…ALTAMIKKFW (117 aa)). D576 is modified (4-aspartylphosphate). One can recognise an HPt domain in the interval 678–771 (GPKLITDGLA…RHDVEVLKAW (94 aa)). The residue at position 717 (H717) is a Phosphohistidine.

Activation requires a sequential transfer of a phosphate group from a His in the primary transmitter domain, to an Asp in the receiver domain and to a His in the secondary transmitter domain.

It localises to the cell inner membrane. It carries out the reaction ATP + protein L-histidine = ADP + protein N-phospho-L-histidine.. Functionally, member of the two-component regulatory system ArcB/ArcA. Sensor-regulator protein for anaerobic repression of the arc modulon. Activates ArcA via a four-step phosphorelay. ArcB can also dephosphorylate ArcA by a reverse phosphorelay involving His-717 and Asp-576. The protein is Aerobic respiration control sensor protein ArcB (arcB) of Escherichia coli (strain K12).